The following is a 185-amino-acid chain: Elongation factor P (185 aa).

Belongs to the elongation factor P family.

It is found in the cytoplasm. It functions in the pathway protein biosynthesis; polypeptide chain elongation. Functionally, involved in peptide bond synthesis. Stimulates efficient translation and peptide-bond synthesis on native or reconstituted 70S ribosomes in vitro. Probably functions indirectly by altering the affinity of the ribosome for aminoacyl-tRNA, thus increasing their reactivity as acceptors for peptidyl transferase. The sequence is that of Elongation factor P from Moorella thermoacetica (strain ATCC 39073 / JCM 9320).